The following is a 370-amino-acid chain: Histidinol-phosphate aminotransferase (370 aa).

Lysine 229 carries the N6-(pyridoxal phosphate)lysine modification.

It belongs to the class-II pyridoxal-phosphate-dependent aminotransferase family. Histidinol-phosphate aminotransferase subfamily. Homodimer. Pyridoxal 5'-phosphate is required as a cofactor.

It catalyses the reaction L-histidinol phosphate + 2-oxoglutarate = 3-(imidazol-4-yl)-2-oxopropyl phosphate + L-glutamate. It participates in amino-acid biosynthesis; L-histidine biosynthesis; L-histidine from 5-phospho-alpha-D-ribose 1-diphosphate: step 7/9. The polypeptide is Histidinol-phosphate aminotransferase (Helicobacter hepaticus (strain ATCC 51449 / 3B1)).